Reading from the N-terminus, the 478-residue chain is tRNA (guanine-N(7)-)-methyltransferase non-catalytic subunit TRM82 (478 aa).

WD repeat units lie at residues 14–53 (SSAD…VLDP), 73–113 (EQKF…GLQQ), 217–258 (GHVS…HIIE), and 263–301 (GHEE…LNEK).

The protein belongs to the WD repeat TRM82 family. As to quaternary structure, forms a heterodimer with the catalytic subunit TRM8.

The protein localises to the nucleus. It functions in the pathway tRNA modification; N(7)-methylguanine-tRNA biosynthesis. Its function is as follows. Required for the formation of N(7)-methylguanine at position 46 (m7G46) in tRNA. In the complex, it is required to stabilize and induce conformational changes of the catalytic subunit. This is tRNA (guanine-N(7)-)-methyltransferase non-catalytic subunit TRM82 from Phaeosphaeria nodorum (strain SN15 / ATCC MYA-4574 / FGSC 10173) (Glume blotch fungus).